Reading from the N-terminus, the 154-residue chain is Myoglobin (154 aa).

Positions 2–148 constitute a Globin domain; that stretch reads GLSDGEWQSV…FRNDIAAKYK (147 aa). Serine 4 is modified (phosphoserine). Histidine 65 provides a ligand contact to nitrite. Histidine 65 is an O2 binding site. Threonine 68 carries the phosphothreonine modification. Histidine 94 contributes to the heme b binding site.

The protein belongs to the globin family. As to quaternary structure, monomeric.

The protein resides in the cytoplasm. The protein localises to the sarcoplasm. It carries out the reaction Fe(III)-heme b-[protein] + nitric oxide + H2O = Fe(II)-heme b-[protein] + nitrite + 2 H(+). The catalysed reaction is H2O2 + AH2 = A + 2 H2O. Functionally, monomeric heme protein which primary function is to store oxygen and facilitate its diffusion within muscle tissues. Reversibly binds oxygen through a pentacoordinated heme iron and enables its timely and efficient release as needed during periods of heightened demand. Depending on the oxidative conditions of tissues and cells, and in addition to its ability to bind oxygen, it also has a nitrite reductase activity whereby it regulates the production of bioactive nitric oxide. Under stress conditions, like hypoxia and anoxia, it also protects cells against reactive oxygen species thanks to its pseudoperoxidase activity. This chain is Myoglobin (MB), found in Perodicticus potto edwarsi (Potto).